The sequence spans 468 residues: tRNA modification GTPase MnmE (468 aa).

Positions 29, 97, and 136 each coordinate (6S)-5-formyl-5,6,7,8-tetrahydrofolate. The TrmE-type G domain occupies 232–390 (GFELAIVGRP…VVAHIVARME (159 aa)). Residue Asn-242 participates in K(+) binding. GTP-binding positions include 242–247 (NVGKSS), 261–267 (TDLAGTT), and 286–289 (DTAG). Residue Ser-246 coordinates Mg(2+). 3 residues coordinate K(+): Thr-261, Leu-263, and Thr-266. Residue Thr-267 participates in Mg(2+) binding. Lys-468 serves as a coordination point for (6S)-5-formyl-5,6,7,8-tetrahydrofolate.

The protein belongs to the TRAFAC class TrmE-Era-EngA-EngB-Septin-like GTPase superfamily. TrmE GTPase family. As to quaternary structure, homodimer. Heterotetramer of two MnmE and two MnmG subunits. K(+) is required as a cofactor.

The protein resides in the cytoplasm. Exhibits a very high intrinsic GTPase hydrolysis rate. Involved in the addition of a carboxymethylaminomethyl (cmnm) group at the wobble position (U34) of certain tRNAs, forming tRNA-cmnm(5)s(2)U34. This chain is tRNA modification GTPase MnmE, found in Magnetococcus marinus (strain ATCC BAA-1437 / JCM 17883 / MC-1).